A 326-amino-acid chain; its full sequence is Eukaryotic translation initiation factor 3 subunit I (326 aa).

5 WD repeats span residues 8–47, 50–89, 145–184, 188–227, and 285–326; these read GHERSITQIKYNREGDLLFSCSKDQKPNVWYSLNGERLGT, GHQGAVWCLDVDWESRKLITGAGDMTTKLWDVEYGTIIAS, MTESKITSMQWGPLDETIITGHDNGNIAIWDVRKGQKVVD, DHAAGINDMQLSKDGTMFVTASRDTTAKLFDSESLMCLKT, and GHFG…NIFE.

Belongs to the eIF-3 subunit I family. As to quaternary structure, component of the eukaryotic translation initiation factor 3 (eIF-3) complex. The eIF-3 complex interacts with pix.

The protein resides in the cytoplasm. Its function is as follows. Component of the eukaryotic translation initiation factor 3 (eIF-3) complex, which is involved in protein synthesis of a specialized repertoire of mRNAs and, together with other initiation factors, stimulates binding of mRNA and methionyl-tRNAi to the 40S ribosome. The eIF-3 complex specifically targets and initiates translation of a subset of mRNAs involved in cell proliferation. The polypeptide is Eukaryotic translation initiation factor 3 subunit I (Drosophila pseudoobscura pseudoobscura (Fruit fly)).